Reading from the N-terminus, the 268-residue chain is Orotidine 5'-phosphate decarboxylase (268 aa).

Residues aspartate 38, lysine 60–histidine 62, aspartate 92–threonine 101, tyrosine 218, and arginine 236 each bind substrate. Catalysis depends on lysine 94, which acts as the Proton donor.

This sequence belongs to the OMP decarboxylase family.

It catalyses the reaction orotidine 5'-phosphate + H(+) = UMP + CO2. It functions in the pathway pyrimidine metabolism; UMP biosynthesis via de novo pathway; UMP from orotate: step 2/2. The sequence is that of Orotidine 5'-phosphate decarboxylase (URA3) from Candida tropicalis (Yeast).